The sequence spans 657 residues: Probable intron-encoded endonuclease aI2 (657 aa).

The segment at methionine 1–glycine 245 is COX1 exons 1 to 2 encoded. A run of 6 helical transmembrane segments spans residues isoleucine 19–valine 39, leucine 69–leucine 89, leucine 103–leucine 123, alanine 152–valine 172, proline 188–leucine 208, and methionine 269–valine 289. A COX1 intron 2 encoded region spans residues glutamine 246 to phenylalanine 657.

The protein in the C-terminal section; belongs to the LAGLIDADG endonuclease family. This sequence in the N-terminal section; belongs to the heme-copper respiratory oxidase family. Post-translationally, the mature protein may arise from proteolytic cleavage of an in-frame translation of COX1 exons 1 and 2 plus intron 2, containing the aI2 open reading frame.

Its subcellular location is the mitochondrion. The protein localises to the membrane. In terms of biological role, mitochondrial DNA endonuclease involved in intron homing. This chain is Probable intron-encoded endonuclease aI2 (aI2), found in Debaryomyces hansenii (strain ATCC 36239 / CBS 767 / BCRC 21394 / JCM 1990 / NBRC 0083 / IGC 2968) (Yeast).